The primary structure comprises 227 residues: Cytochrome c oxidase subunit 2 (227 aa).

Over 1 to 26 the chain is Mitochondrial intermembrane; it reads MATWSNFNLQNSASPLMEQIIFFHDH. The helical transmembrane segment at 27-51 threads the bilayer; it reads TLVILIMITILVGYLMISLFFNSYI. Residues 52–62 are Mitochondrial matrix-facing; sequence NRFLLEGQMIE. A helical membrane pass occupies residues 63-81; the sequence is LIWTILPAITLIFIALPSL. The Mitochondrial intermembrane portion of the chain corresponds to 82–227; the sequence is RLLYLLDELN…NFINWINNYS (146 aa). Cu cation-binding residues include H161, C196, E198, C200, H204, and M207. Mg(2+) is bound at residue E198.

The protein belongs to the cytochrome c oxidase subunit 2 family. As to quaternary structure, component of the cytochrome c oxidase (complex IV, CIV), a multisubunit enzyme composed of a catalytic core of 3 subunits and several supernumerary subunits. The complex exists as a monomer or a dimer and forms supercomplexes (SCs) in the inner mitochondrial membrane with ubiquinol-cytochrome c oxidoreductase (cytochrome b-c1 complex, complex III, CIII). The cofactor is Cu cation.

Its subcellular location is the mitochondrion inner membrane. It carries out the reaction 4 Fe(II)-[cytochrome c] + O2 + 8 H(+)(in) = 4 Fe(III)-[cytochrome c] + 2 H2O + 4 H(+)(out). In terms of biological role, component of the cytochrome c oxidase, the last enzyme in the mitochondrial electron transport chain which drives oxidative phosphorylation. The respiratory chain contains 3 multisubunit complexes succinate dehydrogenase (complex II, CII), ubiquinol-cytochrome c oxidoreductase (cytochrome b-c1 complex, complex III, CIII) and cytochrome c oxidase (complex IV, CIV), that cooperate to transfer electrons derived from NADH and succinate to molecular oxygen, creating an electrochemical gradient over the inner membrane that drives transmembrane transport and the ATP synthase. Cytochrome c oxidase is the component of the respiratory chain that catalyzes the reduction of oxygen to water. Electrons originating from reduced cytochrome c in the intermembrane space (IMS) are transferred via the dinuclear copper A center (CU(A)) of subunit 2 and heme A of subunit 1 to the active site in subunit 1, a binuclear center (BNC) formed by heme A3 and copper B (CU(B)). The BNC reduces molecular oxygen to 2 water molecules using 4 electrons from cytochrome c in the IMS and 4 protons from the mitochondrial matrix. This chain is Cytochrome c oxidase subunit 2 (COII), found in Choristoneura fumiferana (Spruce budworm moth).